A 126-amino-acid polypeptide reads, in one-letter code: uncharacterized protein (126 aa).

Residues 55-77 traverse the membrane as a helical segment; the sequence is MLLINSNLVLSGLLLFIDVYRAA.

The protein resides in the membrane. This is an uncharacterized protein from Dictyostelium discoideum (Social amoeba).